The sequence spans 103 residues: Putative membrane protein insertion efficiency factor (103 aa).

Belongs to the UPF0161 family.

Its subcellular location is the cell membrane. Functionally, could be involved in insertion of integral membrane proteins into the membrane. The polypeptide is Putative membrane protein insertion efficiency factor (Clavibacter sepedonicus (Clavibacter michiganensis subsp. sepedonicus)).